A 325-amino-acid polypeptide reads, in one-letter code: Ferrochelatase (325 aa).

His195 and Glu276 together coordinate Fe cation.

It belongs to the ferrochelatase family.

Its subcellular location is the cytoplasm. It carries out the reaction heme b + 2 H(+) = protoporphyrin IX + Fe(2+). Its pathway is porphyrin-containing compound metabolism; protoheme biosynthesis; protoheme from protoporphyrin-IX: step 1/1. Functionally, catalyzes the ferrous insertion into protoporphyrin IX. The protein is Ferrochelatase of Methylococcus capsulatus (strain ATCC 33009 / NCIMB 11132 / Bath).